The primary structure comprises 79 residues: Small ribosomal subunit protein bS16 (79 aa).

It belongs to the bacterial ribosomal protein bS16 family.

The chain is Small ribosomal subunit protein bS16 from Hahella chejuensis (strain KCTC 2396).